Here is a 423-residue protein sequence, read N- to C-terminus: Gamma-glutamyl phosphate reductase (423 aa).

It belongs to the gamma-glutamyl phosphate reductase family.

It is found in the cytoplasm. The enzyme catalyses L-glutamate 5-semialdehyde + phosphate + NADP(+) = L-glutamyl 5-phosphate + NADPH + H(+). Its pathway is amino-acid biosynthesis; L-proline biosynthesis; L-glutamate 5-semialdehyde from L-glutamate: step 2/2. Catalyzes the NADPH-dependent reduction of L-glutamate 5-phosphate into L-glutamate 5-semialdehyde and phosphate. The product spontaneously undergoes cyclization to form 1-pyrroline-5-carboxylate. The polypeptide is Gamma-glutamyl phosphate reductase (Burkholderia orbicola (strain AU 1054)).